The primary structure comprises 325 residues: Aldo-keto reductase family 1 member D1 (325 aa).

Residues 22-26 (GLGTY) and aspartate 52 contribute to the NADP(+) site. Tyrosine 26 is a substrate binding site. Substrate-binding residues include tyrosine 57, tryptophan 88, glutamate 119, and tyrosine 131. The active-site Proton donor is tyrosine 57. NADP(+) contacts are provided by residues 168 to 169 (SN), glutamine 192, and 218 to 223 (HSPLGT). Position 228 is a phosphoserine (serine 228). Tryptophan 229 provides a ligand contact to substrate. Position 272-282 (272-282 (KSFTPERIKEN)) interacts with NADP(+).

It belongs to the aldo/keto reductase family.

It localises to the cytoplasm. It carries out the reaction 5beta-cholestan-3-one + NADP(+) = cholest-4-en-3-one + NADPH + H(+). The catalysed reaction is 4,5beta-dihydrocortisone + NADP(+) = cortisone + NADPH + H(+). The enzyme catalyses cortisol + NADPH + H(+) = 5beta-dihydrocortisol + NADP(+). It catalyses the reaction corticosterone + NADPH + H(+) = 5beta-dihydrocorticosterone + NADP(+). It carries out the reaction 7alpha,12alpha-dihydroxycholest-4-en-3-one + NADPH + H(+) = 7alpha,12alpha-dihydroxy-5beta-cholestan-3-one + NADP(+). The catalysed reaction is 7alpha-hydroxycholest-4-en-3-one + NADPH + H(+) = 7alpha-hydroxy-5beta-cholestan-3-one + NADP(+). The enzyme catalyses epitestosterone + NADPH + H(+) = 5beta-dihydroepitestosterone + NADP(+). It catalyses the reaction androst-4-ene-3,17-dione + NADPH + H(+) = 5beta-androstane-3,17-dione + NADP(+). It carries out the reaction progesterone + NADPH + H(+) = 5beta-pregnan-3,20-dione + NADP(+). The catalysed reaction is 21-hydroxyprogesterone + NADPH + H(+) = 5beta-dihydrodeoxycorticosterone + NADP(+). The enzyme catalyses aldosterone + NADPH + H(+) = 5beta-dihydroaldosterone + NADP(+). It catalyses the reaction 17beta-hydroxyandrosta-1,4-dien-3-one + NADPH + H(+) = 17beta-hydroxy-5beta-androst-1-en-3-one + NADP(+). It carries out the reaction 17beta-hydroxyestr-4-en-3-one + NADPH + H(+) = 17beta-hydroxy-5beta-estran-3-one + NADP(+). The catalysed reaction is 5beta-dihydrotestosterone + NADP(+) = testosterone + NADPH + H(+). The enzyme catalyses androst-4-ene-3,11,17-trione + NADPH + H(+) = 17beta-hydroxyandrost-4-ene-3,11-dione + NADP(+). Its activity is regulated as follows. Subject to inhibition by high substrate concentrations. Inhibited by testosterone concentrations above 10 uM. Inhibited by the primary and secondary bile acids chenodeoxycholic acid and ursodeoxycholic acid. In terms of biological role, catalyzes the stereospecific NADPH-dependent reduction of the C4-C5 double bond of bile acid intermediates and steroid hormones carrying a delta(4)-3-one structure to yield an A/B cis-ring junction. This cis-configuration is crucial for bile acid biosynthesis and plays important roles in steroid metabolism. Capable of reducing a broad range of delta-(4)-3-ketosteroids from C18 (such as, 17beta-hydroxyestr-4-en-3-one) to C27 (such as, 7alpha-hydroxycholest-4-en-3-one). The protein is Aldo-keto reductase family 1 member D1 (Akr1d1) of Mus musculus (Mouse).